We begin with the raw amino-acid sequence, 376 residues long: DNA-directed RNA polymerase subunit alpha (376 aa).

The alpha N-terminal domain (alpha-NTD) stretch occupies residues 1-259 (MSDNSQNLLY…KHFSIFEKMD (259 aa)). Residues 276–376 (KDDILHKLVL…EKIRSKNVKG (101 aa)) are alpha C-terminal domain (alpha-CTD).

Belongs to the RNA polymerase alpha chain family. Homodimer. The RNAP catalytic core consists of 2 alpha, 1 beta, 1 beta' and 1 omega subunit. When a sigma factor is associated with the core the holoenzyme is formed, which can initiate transcription.

It catalyses the reaction RNA(n) + a ribonucleoside 5'-triphosphate = RNA(n+1) + diphosphate. Its function is as follows. DNA-dependent RNA polymerase catalyzes the transcription of DNA into RNA using the four ribonucleoside triphosphates as substrates. This chain is DNA-directed RNA polymerase subunit alpha, found in Chlamydia felis (strain Fe/C-56) (Chlamydophila felis).